The sequence spans 347 residues: DnaJ protein ERDJ3B (347 aa).

A signal peptide spans 1 to 23; that stretch reads MAAPRWIGPLLLLLLHFVAAVAG. Positions 25-90 constitute a J domain; it reads SYYDVLQVPK…EKRKIYDRYG (66 aa).

In terms of assembly, interacts with BIP1.

It is found in the endoplasmic reticulum. Its function is as follows. May play a role in protein folding in the endoplasmic reticulum. The chain is DnaJ protein ERDJ3B from Oryza sativa subsp. japonica (Rice).